The following is a 179-amino-acid chain: IMPACT family member in pol 5'region (179 aa).

The protein belongs to the IMPACT family.

The chain is IMPACT family member in pol 5'region from Thermus thermophilus.